Consider the following 377-residue polypeptide: Floricaula/leafy homolog (377 aa).

Positions 116–126 (RRRLDEEDPRR) are enriched in basic and acidic residues. Residues 116–190 (RRRLDEEDPR…RKKGQRKVVD (75 aa)) are disordered. Positions 131-141 (SGDNNTNTLDA) are enriched in polar residues. DNA-binding regions lie at residues 206 to 210 (REHPF), 275 to 282 (NKPKMRHY), and 346 to 349 (YVPT).

Belongs to the FLO/LFY family. As to expression, in developing inflorescences, leaf primordia and very young leaves.

Its subcellular location is the nucleus. Its function is as follows. Probable transcription factor. The polypeptide is Floricaula/leafy homolog (FL) (Populus trichocarpa (Western balsam poplar)).